A 215-amino-acid polypeptide reads, in one-letter code: Probable phosphoglycerate mutase GpmB (215 aa).

Residues 8 to 15 (RHGETQWN), 21 to 22 (QG), Arg-58, Lys-60, 82 to 85 (ELDM), 104 to 105 (RR), and 151 to 152 (GI) each bind substrate. His-9 acts as the Tele-phosphohistidine intermediate in catalysis. The active-site Proton donor/acceptor is the Glu-82.

This sequence belongs to the phosphoglycerate mutase family. GpmB subfamily.

It carries out the reaction (2R)-2-phosphoglycerate = (2R)-3-phosphoglycerate. The protein operates within carbohydrate degradation; glycolysis; pyruvate from D-glyceraldehyde 3-phosphate: step 3/5. The sequence is that of Probable phosphoglycerate mutase GpmB from Salmonella paratyphi C (strain RKS4594).